Here is a 698-residue protein sequence, read N- to C-terminus: tRNA (guanine(37)-N(1))-methyltransferase (698 aa).

Residues 233-254 (DSTAHDSVQRNEGKTPKGPLDG) form a disordered region. The segment covering 234-247 (STAHDSVQRNEGKT) has biased composition (basic and acidic residues). S-adenosyl-L-methionine contacts are provided by residues R394, 432–433 (DI), and 459–460 (DA). 2 disordered regions span residues 500-522 (PDQN…GHVD) and 534-582 (KKKL…DAPR). 3 stretches are compositionally biased toward basic and acidic residues: residues 513–522 (RESDRVGHVD), 539–550 (HADTNDPLEERP), and 569–582 (TNND…DAPR). Residue N603 coordinates S-adenosyl-L-methionine.

It belongs to the class I-like SAM-binding methyltransferase superfamily. TRM5/TYW2 family. Monomer.

The protein localises to the mitochondrion matrix. The protein resides in the nucleus. It is found in the cytoplasm. The catalysed reaction is guanosine(37) in tRNA + S-adenosyl-L-methionine = N(1)-methylguanosine(37) in tRNA + S-adenosyl-L-homocysteine + H(+). In terms of biological role, specifically methylates the N1 position of guanosine-37 in various cytoplasmic and mitochondrial tRNAs. Methylation is not dependent on the nature of the nucleoside 5' of the target nucleoside. This is the first step in the biosynthesis of wybutosine (yW), a modified base adjacent to the anticodon of tRNAs and required for accurate decoding. The chain is tRNA (guanine(37)-N(1))-methyltransferase from Plasmodium knowlesi (strain H).